We begin with the raw amino-acid sequence, 601 residues long: Glutathione-regulated potassium-efflux system protein KefB (601 aa).

Transmembrane regions (helical) follow at residues 4 to 24 (ADLLTAGVLFLFAAVAAVPLA), 29 to 49 (IGAVLGYLLAGIAIGPWGLGF), 55 to 75 (EILHFSELGVVFLMFIIGLEL), 87 to 107 (IFGVGAAQVLLSAAVLAGLLM), 111 to 131 (FLWQAAVVGGIGLAMSSTAMA), 152 to 172 (VLLFQDLAVIPALALVPLLAG), 177 to 197 (HFDWFKVAMKVLAFAVMLIGG), 207 to 227 (FIAASGVREVFTAATLLLVLS), 230 to 250 (LFMDALGLSMALGTFIAGVLL), 262 to 282 (AIDPFKGLLLGLFFISVGMSL), 284 to 304 (LGVLYTHLLWVAASVVILVVI), 324 to 344 (MQFASVLSQGGEFAFVLFSTA), and 356 to 376 (ALLLVTVTLSMMTTPLLMKGI). The RCK N-terminal domain occupies 400 to 519 (KPQVIVVGFG…AGVTQFSRET (120 aa)).

The protein belongs to the monovalent cation:proton antiporter 2 (CPA2) transporter (TC 2.A.37) family. KefB subfamily. As to quaternary structure, interacts with the regulatory subunit KefG.

It localises to the cell inner membrane. Functionally, pore-forming subunit of a potassium efflux system that confers protection against electrophiles. Catalyzes K(+)/H(+) antiport. In Salmonella enteritidis PT4 (strain P125109), this protein is Glutathione-regulated potassium-efflux system protein KefB.